The sequence spans 339 residues: Uroporphyrinogen decarboxylase (339 aa).

Residues arginine 21 to arginine 25, aspartate 71, tyrosine 146, serine 201, and histidine 316 each bind substrate.

The protein belongs to the uroporphyrinogen decarboxylase family. In terms of assembly, homodimer.

It localises to the cytoplasm. It carries out the reaction uroporphyrinogen III + 4 H(+) = coproporphyrinogen III + 4 CO2. It participates in porphyrin-containing compound metabolism; protoporphyrin-IX biosynthesis; coproporphyrinogen-III from 5-aminolevulinate: step 4/4. Functionally, catalyzes the decarboxylation of four acetate groups of uroporphyrinogen-III to yield coproporphyrinogen-III. This Rickettsia canadensis (strain McKiel) protein is Uroporphyrinogen decarboxylase.